The sequence spans 418 residues: uncharacterized protein (418 aa).

Positions I7–P158 constitute an N-acetyltransferase domain. Residues V87–V89 and R95–T100 each bind acetyl-CoA. The active-site Proton donor is Y128. The Proton acceptor; via carboxylate role is filled by F418.

This sequence belongs to the acetyltransferase Eis family. As to quaternary structure, homohexamer; trimer of dimers.

This is an uncharacterized protein from Streptomyces avermitilis (strain ATCC 31267 / DSM 46492 / JCM 5070 / NBRC 14893 / NCIMB 12804 / NRRL 8165 / MA-4680).